The primary structure comprises 303 residues: Foldase protein PrsA (303 aa).

An N-terminal signal peptide occupies residues 1–20 (MMKKWLLAAASLLMVVTLAG). A lipid anchor (N-palmitoyl cysteine) is attached at Cys-21. Residue Cys-21 is the site of S-diacylglycerol cysteine attachment. In terms of domain architecture, PpiC spans 137–233 (EPKVEVQHIL…YGYHVIRMIK (97 aa)).

Belongs to the PrsA family.

The protein localises to the cell membrane. It carries out the reaction [protein]-peptidylproline (omega=180) = [protein]-peptidylproline (omega=0). In terms of biological role, plays a major role in protein secretion by helping the post-translocational extracellular folding of several secreted proteins. This Latilactobacillus sakei subsp. sakei (strain 23K) (Lactobacillus sakei subsp. sakei) protein is Foldase protein PrsA.